The chain runs to 179 residues: Endoribonuclease YbeY (179 aa).

Zn(2+) is bound by residues His141, His145, and His151.

The protein belongs to the endoribonuclease YbeY family. The cofactor is Zn(2+).

It is found in the cytoplasm. In terms of biological role, single strand-specific metallo-endoribonuclease involved in late-stage 70S ribosome quality control and in maturation of the 3' terminus of the 16S rRNA. In Synechocystis sp. (strain ATCC 27184 / PCC 6803 / Kazusa), this protein is Endoribonuclease YbeY.